The primary structure comprises 409 residues: 4-hydroxy-3-methylbut-2-en-1-yl diphosphate synthase (ferredoxin) (409 aa).

Over residues 1 to 12 (MQTLDRPNAPTQ) the composition is skewed to polar residues. The interval 1–22 (MQTLDRPNAPTQQPYPEPVYPR) is disordered. Residues cysteine 314, cysteine 317, cysteine 348, and glutamate 355 each contribute to the [4Fe-4S] cluster site.

Belongs to the IspG family. [4Fe-4S] cluster is required as a cofactor.

The catalysed reaction is (2E)-4-hydroxy-3-methylbut-2-enyl diphosphate + 2 oxidized [2Fe-2S]-[ferredoxin] + H2O = 2-C-methyl-D-erythritol 2,4-cyclic diphosphate + 2 reduced [2Fe-2S]-[ferredoxin] + H(+). It participates in isoprenoid biosynthesis; isopentenyl diphosphate biosynthesis via DXP pathway; isopentenyl diphosphate from 1-deoxy-D-xylulose 5-phosphate: step 5/6. In terms of biological role, converts 2C-methyl-D-erythritol 2,4-cyclodiphosphate (ME-2,4cPP) into 1-hydroxy-2-methyl-2-(E)-butenyl 4-diphosphate. This is 4-hydroxy-3-methylbut-2-en-1-yl diphosphate synthase (ferredoxin) from Synechococcus sp. (strain JA-2-3B'a(2-13)) (Cyanobacteria bacterium Yellowstone B-Prime).